The primary structure comprises 146 residues: Hemoglobin subunit beta (146 aa).

At Val-1 the chain carries N-acetylvaline. Residues 2–146 form the Globin domain; the sequence is HLSADEKNAL…VANALAHKYH (145 aa). The residue at position 44 (Ser-44) is a Phosphoserine. Position 59 is an N6-acetyllysine (Lys-59). His-63 is a binding site for heme b. Lys-82 is subject to N6-acetyllysine. His-92 is a heme b binding site. Cys-93 is subject to S-nitrosocysteine. Residue Lys-144 is modified to N6-acetyllysine.

This sequence belongs to the globin family. In terms of assembly, heterotetramer of two alpha chains and two beta chains. In terms of tissue distribution, red blood cells.

Its function is as follows. Involved in oxygen transport from the lung to the various peripheral tissues. In Sciurus carolinensis (Eastern gray squirrel), this protein is Hemoglobin subunit beta.